The chain runs to 257 residues: Imidazole glycerol phosphate synthase subunit HisF (257 aa).

Active-site residues include aspartate 12 and aspartate 131.

It belongs to the HisA/HisF family. As to quaternary structure, heterodimer of HisH and HisF.

The protein localises to the cytoplasm. The catalysed reaction is 5-[(5-phospho-1-deoxy-D-ribulos-1-ylimino)methylamino]-1-(5-phospho-beta-D-ribosyl)imidazole-4-carboxamide + L-glutamine = D-erythro-1-(imidazol-4-yl)glycerol 3-phosphate + 5-amino-1-(5-phospho-beta-D-ribosyl)imidazole-4-carboxamide + L-glutamate + H(+). It participates in amino-acid biosynthesis; L-histidine biosynthesis; L-histidine from 5-phospho-alpha-D-ribose 1-diphosphate: step 5/9. IGPS catalyzes the conversion of PRFAR and glutamine to IGP, AICAR and glutamate. The HisF subunit catalyzes the cyclization activity that produces IGP and AICAR from PRFAR using the ammonia provided by the HisH subunit. The sequence is that of Imidazole glycerol phosphate synthase subunit HisF from Paraburkholderia phymatum (strain DSM 17167 / CIP 108236 / LMG 21445 / STM815) (Burkholderia phymatum).